Reading from the N-terminus, the 116-residue chain is Flagellar transcriptional regulator FlhD (116 aa).

The protein belongs to the FlhD family. In terms of assembly, homodimer; disulfide-linked. Forms a heterohexamer composed of two FlhC and four FlhD subunits. Each FlhC binds a FlhD dimer, forming a heterotrimer, and a hexamer assembles by dimerization of two heterotrimers.

The protein resides in the cytoplasm. Its function is as follows. Functions in complex with FlhC as a master transcriptional regulator that regulates transcription of several flagellar and non-flagellar operons by binding to their promoter region. Activates expression of class 2 flagellar genes, including fliA, which is a flagellum-specific sigma factor that turns on the class 3 genes. Also regulates genes whose products function in a variety of physiological pathways. The chain is Flagellar transcriptional regulator FlhD from Enterobacter sp. (strain 22).